A 68-amino-acid polypeptide reads, in one-letter code: Large ribosomal subunit protein bL33c (68 aa).

This sequence belongs to the bacterial ribosomal protein bL33 family.

It is found in the plastid. This Cuscuta exaltata (Tall dodder) protein is Large ribosomal subunit protein bL33c.